Here is a 449-residue protein sequence, read N- to C-terminus: MFS-type transporter 1 (449 aa).

Basic and acidic residues predominate over residues Met1–Lys37. Residues Met1–Asn43 are disordered. 6 helical membrane passes run Val61 to Phe81, Thr97 to Gly117, Tyr127 to Thr147, Ile152 to Val172, Leu185 to Phe205, and Val212 to Ala232. N-linked (GlcNAc...) asparagine glycosylation is present at Asn233. The next 6 helical transmembrane spans lie at Leu262–Ile282, Tyr298–Ala318, Val326–Ala346, Ala349–Leu369, Phe390–His410, and Ile420–Leu440.

Belongs to the major facilitator superfamily. Monocarboxylate porter (TC 2.A.1.13) family.

It is found in the cell membrane. It carries out the reaction erythrostominone(in) = erythrostominone(out). The catalysed reaction is deoxyerythrostominone(in) = deoxyerythrostominone(out). It catalyses the reaction epierythrostominol(in) = epierythrostominol(out). The enzyme catalyses deoxyerythrostominol(in) = deoxyerythrostominol(out). In terms of biological role, MFS-type transporter that mediates the secretion of the 4 major naphthoquinone derivatives produced, erythrostominone (NQ1), deoxyerythrostominone (NQ2), epierythrostominol (NQ4), and deoxyerythrostominol (NQ5), as well as of 3 newly identified naphthoquinone derivatives termed NQ7, NQ8 and NQ9. The protein is MFS-type transporter 1 of Ophiocordyceps sp. (strain BCC 1869) (Entomopathogenic fungus).